The chain runs to 107 residues: Ferredoxin 1 (107 aa).

4Fe-4S ferredoxin-type domains lie at 2–30 (TFVV…YEGP) and 31–60 (NFLV…SEDE). Positions 9 and 17 each coordinate [3Fe-4S] cluster. Residues C21, C40, C43, and C46 each coordinate [4Fe-4S] cluster. [3Fe-4S] cluster is bound at residue C50.

[4Fe-4S] cluster serves as cofactor. [3Fe-4S] cluster is required as a cofactor.

Its function is as follows. Ferredoxins are iron-sulfur proteins that transfer electrons in a wide variety of metabolic reactions. This is Ferredoxin 1 (fdxA) from Pseudomonas putida (strain ATCC 47054 / DSM 6125 / CFBP 8728 / NCIMB 11950 / KT2440).